A 246-amino-acid polypeptide reads, in one-letter code: Ribonuclease 3 (246 aa).

Positions L10 to G135 constitute an RNase III domain. E50 contributes to the Mg(2+) binding site. The active site involves D54. 2 residues coordinate Mg(2+): D121 and E124. Residue E124 is part of the active site. One can recognise a DRBM domain in the interval D161–A230.

The protein belongs to the ribonuclease III family. Homodimer. Mg(2+) is required as a cofactor.

The protein resides in the cytoplasm. The enzyme catalyses Endonucleolytic cleavage to 5'-phosphomonoester.. In terms of biological role, digests double-stranded RNA. Involved in the processing of primary rRNA transcript to yield the immediate precursors to the large and small rRNAs (23S and 16S). Processes some mRNAs, and tRNAs when they are encoded in the rRNA operon. Processes pre-crRNA and tracrRNA of type II CRISPR loci if present in the organism. The sequence is that of Ribonuclease 3 from Mycoplasma mobile (strain ATCC 43663 / 163K / NCTC 11711) (Mesomycoplasma mobile).